A 375-amino-acid polypeptide reads, in one-letter code: Alpha-2,8-sialyltransferase 8B (375 aa).

Residues 1–6 lie on the Cytoplasmic side of the membrane; the sequence is MQLQFR. A helical; Signal-anchor for type II membrane protein transmembrane segment spans residues 7 to 23; that stretch reads SWMLAALTLLVVFLIFA. Residues 24–375 are Lumenal-facing; the sequence is DISEIEEEIG…LTVGQCDGAT (352 aa). Residues Asn60, Asn72, Asn89, and Asn134 are each glycosylated (N-linked (GlcNAc...) asparagine). Cystine bridges form between Cys157/Cys307 and Cys171/Cys371. CMP-N-acetyl-beta-neuraminate-binding residues include Asn162 and Asn185. N-linked (GlcNAc...) asparagine glycans are attached at residues Asn219 and Asn234. Positions 294, 295, 296, 316, 329, and 330 each coordinate CMP-N-acetyl-beta-neuraminate. Residue His346 is the Proton donor/acceptor of the active site.

The protein belongs to the glycosyltransferase 29 family. In terms of processing, autopolysialylated. Autopolysialylation is not a prerequisite for the polysialylation acitity, but enhances the polysialylation acitity. Expressed only in newborn brain.

The protein localises to the golgi apparatus membrane. It is found in the secreted. The protein resides in the cell membrane. The catalysed reaction is [N-acetyl-alpha-D-neuraminosyl-(2-&gt;8)](n) + CMP-N-acetyl-beta-neuraminate = [N-acetyl-alpha-D-neuraminosyl-(2-&gt;8)](n+1) + CMP + H(+). Its pathway is protein modification; protein glycosylation. Its function is as follows. Catalyzes the transfer of a sialic acid from a CMP-linked sialic acid donor onto a terminal alpha-2,3-, alpha-2,6-, or alpha-2,8-linked sialic acid of an N-linked glycan acceptor through alpha-2,8-linkages. Therefore, participates in polysialic acid synthesis on various sialylated N-acetyllactosaminyl oligosaccharides (alpha-2,3-, alpha-2,6-, or alpha-2,8-linked sialic acid), including NCAM1, NCAM1 N-glycans, FETUB N-glycans, and to a lesser extent sialylparagloboside (SPG) and AHSG, which does not require the initial addition of an alpha 2,8-sialic acid. However, does not exhibit sialic acid-polymerase activity. Catalyzes polysialic acid synthesis in the hippocampal on NCAM1 and supports neurite outgrowth. ST8SIA2-mediated polysialylation influences on oligodendrocyte differentiation and may promote the integrity of myelin and axons. This is Alpha-2,8-sialyltransferase 8B from Rattus norvegicus (Rat).